A 374-amino-acid chain; its full sequence is DNA replication and repair protein RecF (374 aa).

30-37 is an ATP binding site; that stretch reads GENAQGKT.

The protein belongs to the RecF family.

It localises to the cytoplasm. Functionally, the RecF protein is involved in DNA metabolism; it is required for DNA replication and normal SOS inducibility. RecF binds preferentially to single-stranded, linear DNA. It also seems to bind ATP. The polypeptide is DNA replication and repair protein RecF (Geobacillus sp. (strain WCH70)).